Here is a 77-residue protein sequence, read N- to C-terminus: Conotoxin VnMEKL-0223 (77 aa).

The first 19 residues, 1-19 (MQKLTILLLVAAVLMSTQA), serve as a signal peptide directing secretion. Positions 20–37 (LIKGGGEKRPKEKIKFLS) are excised as a propeptide. Disulfide bonds link cysteine 51–cysteine 65, cysteine 58–cysteine 69, and cysteine 64–cysteine 74.

Belongs to the conotoxin O2 superfamily. Expressed by the venom duct.

Its subcellular location is the secreted. The polypeptide is Conotoxin VnMEKL-0223 (Conus ventricosus (Mediterranean cone)).